Reading from the N-terminus, the 122-residue chain is Phosphoribosyl-ATP pyrophosphatase (122 aa).

Belongs to the PRA-PH family.

Its subcellular location is the cytoplasm. The catalysed reaction is 1-(5-phospho-beta-D-ribosyl)-ATP + H2O = 1-(5-phospho-beta-D-ribosyl)-5'-AMP + diphosphate + H(+). The protein operates within amino-acid biosynthesis; L-histidine biosynthesis; L-histidine from 5-phospho-alpha-D-ribose 1-diphosphate: step 2/9. This is Phosphoribosyl-ATP pyrophosphatase from Burkholderia mallei (strain NCTC 10247).